A 76-amino-acid chain; its full sequence is Omega-conotoxin-like TxMKLT1-0141 (76 aa).

A signal peptide spans 1–22 (MKLTCMMIVAVLFLTAWTFATA). The propeptide occupies 23 to 50 (DDSSNGLENLFPKAHHEMKNPEASKLNE). Cystine bridges form between Cys-52-Cys-67, Cys-59-Cys-70, and Cys-66-Cys-75.

This sequence belongs to the conotoxin O1 superfamily. As to expression, expressed by the venom duct.

Its subcellular location is the secreted. In terms of biological role, omega-conotoxins act at presynaptic membranes, they bind and block voltage-gated calcium channels (Cav). The protein is Omega-conotoxin-like TxMKLT1-0141 of Conus textile (Cloth-of-gold cone).